An 863-amino-acid chain; its full sequence is Receptor-like protein 9DC3 (863 aa).

Positions 1 to 21 are cleaved as a signal peptide; that stretch reads MGCVKLVFFMLYVFLFQLVSS. Residues 22 to 812 are Extracellular-facing; that stretch reads SSLPHLCPED…EEDSPMISWQ (791 aa). The tract at residues 24–90 is N-cap; sequence LPHLCPEDQA…GVHCDETTGQ (67 aa). N71 and N108 each carry an N-linked (GlcNAc...) asparagine glycan. Residues 91-114 form an LRR 1; degenerate repeat; that stretch reads VIALDLRCSQLQGKFHSNSSLFQL. 2 LRR repeats span residues 115-138 and 140-163; these read SNLK…KFGE and SDLT…ISHL. Residues 164-190 form an LRR 4; degenerate repeat; it reads SKLHVLLIGDQYGLSIVPHNFEPLLKN. N190, N203, and N211 each carry an N-linked (GlcNAc...) asparagine glycan. LRR repeat units lie at residues 191-213, 214-237, 240-262, 264-286, 287-311, and 312-336; these read LTQL…SNFS, SHLT…VFHL, LEFL…KWNS, ASLM…SFSH, LTSL…LWNL, and TNIE…IFEK. An N-linked (GlcNAc...) asparagine glycan is attached at N261. N-linked (GlcNAc...) asparagine glycosylation is found at N299 and N310. Residues 337–357 form an LRR 11; degenerate repeat; the sequence is LKKLSLFRNDNLDGGLEFLSF. LRR repeat units lie at residues 358–382, 383–406, 408–428, 429–452, 454–476, 477–500, 502–524, 525–549, 551–572, 573–597, 599–623, 667–690, 691–714, 715–739, and 741–759; these read NTQL…ISGL, QNLE…IFSL, SLVE…EFKS, KTLS…LLNQ, NLQL…ICNL, KTLI…VVER, EYLS…TFSV, GNIL…LINC, YLAL…WLGH, LSQL…GNTN, FTRL…ILGN, LDSN…IIGD, LVGL…SFQN, LSVL…LASL, and FLEV…IPKG. N-linked (GlcNAc...) asparagine glycans are attached at residues N378, N396, and N416. The N-linked (GlcNAc...) asparagine glycan is linked to N464. N519 carries an N-linked (GlcNAc...) asparagine glycan. N563 is a glycosylation site (N-linked (GlcNAc...) asparagine). N-linked (GlcNAc...) asparagine glycans are attached at residues N674, N698, and N714. N-linked (GlcNAc...) asparagine glycans are attached at residues N746 and N767. The C-cap/acidic domain stretch occupies residues 760–812; that stretch reads KQFDSFGNTSYQGNDGLCGFPLSKLCGGDDQVTTPAELDQEEEEEDSPMISWQ. The chain crosses the membrane as a helical span at residues 813–833; sequence GVLVGYGCGLVIGLSVIYIMW. Residues 834 to 863 are Cytoplasmic-facing; the sequence is STQYPAWFSRMHLKLEQIVTTRMKKHKKRY.

Belongs to the RLP family.

The protein localises to the cell membrane. Functionally, involved in plant defense. Confers resistance to the fungal pathogen C.fulvum through recognition of the AVR9 elicitor protein. The polypeptide is Receptor-like protein 9DC3 (Solanum pimpinellifolium (Currant tomato)).